The following is an 85-amino-acid chain: Putative membrane protein insertion efficiency factor (85 aa).

This sequence belongs to the UPF0161 family.

It localises to the cell inner membrane. Could be involved in insertion of integral membrane proteins into the membrane. This chain is Putative membrane protein insertion efficiency factor, found in Vibrio atlanticus (strain LGP32) (Vibrio splendidus (strain Mel32)).